The following is a 580-amino-acid chain: Type II methyltransferase M.BanIII (580 aa).

Belongs to the N(4)/N(6)-methyltransferase family.

It carries out the reaction a 2'-deoxyadenosine in DNA + S-adenosyl-L-methionine = an N(6)-methyl-2'-deoxyadenosine in DNA + S-adenosyl-L-homocysteine + H(+). Functionally, a gamma subtype methylase, recognizes the double-stranded sequence 5'-ATCGAT-3', methylates A-5 on both strands, and protects the DNA from cleavage by the BanIII endonuclease. The sequence is that of Type II methyltransferase M.BanIII (banIIIM) from Aneurinibacillus aneurinilyticus (Bacillus aneurinolyticus).